A 176-amino-acid polypeptide reads, in one-letter code: 3-hydroxydecanoyl-[acyl-carrier-protein] dehydratase (176 aa).

His75 is a catalytic residue.

This sequence belongs to the thioester dehydratase family. FabA subfamily. In terms of assembly, homodimer.

Its subcellular location is the cytoplasm. The catalysed reaction is a (3R)-hydroxyacyl-[ACP] = a (2E)-enoyl-[ACP] + H2O. It carries out the reaction (3R)-hydroxydecanoyl-[ACP] = (2E)-decenoyl-[ACP] + H2O. The enzyme catalyses (2E)-decenoyl-[ACP] = (3Z)-decenoyl-[ACP]. It functions in the pathway lipid metabolism; fatty acid biosynthesis. In terms of biological role, necessary for the introduction of cis unsaturation into fatty acids. Catalyzes the dehydration of (3R)-3-hydroxydecanoyl-ACP to E-(2)-decenoyl-ACP and then its isomerization to Z-(3)-decenoyl-ACP. Can catalyze the dehydratase reaction for beta-hydroxyacyl-ACPs with saturated chain lengths up to 16:0, being most active on intermediate chain length. The polypeptide is 3-hydroxydecanoyl-[acyl-carrier-protein] dehydratase (Glaesserella parasuis serovar 5 (strain SH0165) (Haemophilus parasuis)).